The following is a 1756-amino-acid chain: RANBP2-like and GRIP domain-containing protein 2 (1756 aa).

Position 21 is a phosphoserine (S21). TPR repeat units lie at residues 59–92, 583–616, and 647–680; these read PRAHRFLGLLYELEENTEKAVECYRRSLELNPPQ, QKMGRGLNSSYDQQEYIGRSVHYWKKVLPLLKII, and EDAHITFAILDAVHGNIEDAVTAFESIKSVVSYW. A disordered region spans residues 759-804; sequence GPLYKNGSLRNADSEIKHSTPSPTKYSLSPSKSYKYSPKTPPRWAE. Positions 777–796 are enriched in low complexity; the sequence is STPSPTKYSLSPSKSYKYSP. Residues 1029–1165 form the RanBD1 1 domain; sequence HFEPVVQMPE…FEECQRLLLD (137 aa). Disordered regions lie at residues 1206 to 1241 and 1299 to 1324; these read TKVTEEENKGSGTGAAGASDTTIKPNPENTGPTLEW and AKLNQSGTSVGTDEESDVTQEEERDG. Positions 1228 to 1237 are enriched in polar residues; the sequence is IKPNPENTGP. Acidic residues predominate over residues 1310 to 1322; it reads TDEESDVTQEEER. Residues 1326–1462 enclose the RanBD1 2 domain; sequence YFEPVVPLPD…FDEAKTAQEK (137 aa). Positions 1573–1586 are enriched in polar residues; the sequence is NDSETSSVAQSGSE. The interval 1573-1614 is disordered; sequence NDSETSSVAQSGSESKVEPKKCELSKNSDIEQSSDSKVKNLS. Basic and acidic residues predominate over residues 1587–1610; that stretch reads SKVEPKKCELSKNSDIEQSSDSKV. Residues 1693 to 1743 form the GRIP domain; the sequence is QEESAANVEHLKNVLLQFIFLKPGSERESLLPVINTMLQLSPEEKGKLAAV.

This is RANBP2-like and GRIP domain-containing protein 2 (RGPD2) from Homo sapiens (Human).